Reading from the N-terminus, the 481-residue chain is Cysteine--tRNA ligase (481 aa).

C29 is a Zn(2+) binding site. The 'HIGH' region signature appears at V31–H41. Residues C209, H234, and E238 each coordinate Zn(2+). A 'KMSKS' region motif is present at residues K266–S270. K269 provides a ligand contact to ATP.

It belongs to the class-I aminoacyl-tRNA synthetase family. Monomer. It depends on Zn(2+) as a cofactor.

It localises to the cytoplasm. The catalysed reaction is tRNA(Cys) + L-cysteine + ATP = L-cysteinyl-tRNA(Cys) + AMP + diphosphate. This is Cysteine--tRNA ligase from Syntrophotalea carbinolica (strain DSM 2380 / NBRC 103641 / GraBd1) (Pelobacter carbinolicus).